A 98-amino-acid polypeptide reads, in one-letter code: Phosphoribosyl-ATP pyrophosphatase (98 aa).

This sequence belongs to the PRA-PH family.

It localises to the cytoplasm. The catalysed reaction is 1-(5-phospho-beta-D-ribosyl)-ATP + H2O = 1-(5-phospho-beta-D-ribosyl)-5'-AMP + diphosphate + H(+). Its pathway is amino-acid biosynthesis; L-histidine biosynthesis; L-histidine from 5-phospho-alpha-D-ribose 1-diphosphate: step 2/9. This is Phosphoribosyl-ATP pyrophosphatase from Pelotomaculum thermopropionicum (strain DSM 13744 / JCM 10971 / SI).